The following is a 535-amino-acid chain: Glucan 1,6-alpha-glucosidase (535 aa).

The active-site Nucleophile is D194. The active-site Proton donor is the E236.

The protein belongs to the glycosyl hydrolase 13 family.

The protein localises to the cytoplasm. It catalyses the reaction Hydrolysis of (1-&gt;6)-alpha-D-glucosidic linkages in (1-&gt;6)-alpha-D-glucans and derived oligosaccharides.. Functionally, the physiological substrates may be short isomaltosaccharides. This chain is Glucan 1,6-alpha-glucosidase (dexB), found in Streptococcus pneumoniae serotype 4 (strain ATCC BAA-334 / TIGR4).